Reading from the N-terminus, the 584-residue chain is DNA ligase (584 aa).

Residue E249 coordinates ATP. K251 (N6-AMP-lysine intermediate) is an active-site residue. 6 residues coordinate ATP: R256, R271, E301, F341, R416, and K422.

The protein belongs to the ATP-dependent DNA ligase family. The cofactor is Mg(2+).

It carries out the reaction ATP + (deoxyribonucleotide)n-3'-hydroxyl + 5'-phospho-(deoxyribonucleotide)m = (deoxyribonucleotide)n+m + AMP + diphosphate.. Functionally, DNA ligase that seals nicks in double-stranded DNA during DNA replication, DNA recombination and DNA repair. The chain is DNA ligase from Pyrobaculum islandicum (strain DSM 4184 / JCM 9189 / GEO3).